Consider the following 149-residue polypeptide: Putative pre-16S rRNA nuclease (149 aa).

Belongs to the YqgF nuclease family.

It is found in the cytoplasm. Its function is as follows. Could be a nuclease involved in processing of the 5'-end of pre-16S rRNA. In Burkholderia lata (strain ATCC 17760 / DSM 23089 / LMG 22485 / NCIMB 9086 / R18194 / 383), this protein is Putative pre-16S rRNA nuclease.